Here is a 92-residue protein sequence, read N- to C-terminus: Large ribosomal subunit protein bL27 (92 aa).

The interval 1 to 21 (MSKKKGVGSSRNGRDSESKRL) is disordered. Residues 12 to 21 (NGRDSESKRL) are compositionally biased toward basic and acidic residues.

Belongs to the bacterial ribosomal protein bL27 family.

This Halothermothrix orenii (strain H 168 / OCM 544 / DSM 9562) protein is Large ribosomal subunit protein bL27.